The chain runs to 275 residues: MFSSYRLARHLQKEAQAQHNNSEFTEEQKKTIGKIATCLELRSAALQSTQSQEEFKLEDLKKLEPILKNILTYNKEFPFDVQPVPLRRILAPGEEENLEFEEDEEEGGAGAGSPDSFPARVPGTLLPRLPSEPGMTLLTIRIEKIGLKDAGQCIDPYITVSVKDLNGIDLTPVQDTPVASRKEDTYVHFNVDIELQKHVEKLTKGAAIFFEFKHYKPKKRFTSTKCFAFMEMDEIKPGPIVIELYKKPTDFKRKKLQLLTKKPLYLHLHQTLHKE.

The segment covering 97–107 (NLEFEEDEEEG) has biased composition (acidic residues). The disordered stretch occupies residues 97–125 (NLEFEEDEEEGGAGAGSPDSFPARVPGTL). Residue Ser-113 is modified to Phosphoserine. The segment at 123–190 (GTLLPRLPSE…RKEDTYVHFN (68 aa)) is axin-binding. The region spanning 126 to 273 (LPRLPSEPGM…LYLHLHQTLH (148 aa)) is the C2 Aida-type domain.

This sequence belongs to the AIDA family. In terms of assembly, interacts with AXIN1.

In terms of biological role, acts as a ventralizing factor during embryogenesis. Inhibits axin-mediated JNK activation by binding axin and disrupting axin homodimerization. This in turn antagonizes a Wnt/beta-catenin-independent dorsalization pathway activated by AXIN/JNK-signaling. The sequence is that of Axin interactor, dorsalization-associated protein (AIDA) from Macaca fascicularis (Crab-eating macaque).